The following is a 543-amino-acid chain: MRVLPATLLVGAATAAVPPFQQILGLPKKGADTLSKPLHDFQEQLKTLSDDARRLWDEVAKHFPDSMDHNPVFSLPKKHTRRPDSHWDHIVRGADVQSVWVTGANGEKEREVDGKLEAYDLRVKTTDPGALGIDPGVKQYTGYLDDNENDKHLFYWFFESRNDPKNDPVVLWLNGGPGCSSLTGLFLELGPSSIDSKIKPVYNDFAWNSNASVIFLDQPVNVGYSYSGSAVSDTVAAGKDVYALLTLFFKQFPEYAKQDFHIAGESYAGHYIPVFASEILSHKKRNINLKSVLIGNGLTDPLTQYDHYRPMACGDGGYPAVLDEASCQSMDNALPRCKSMIESCYNTESSWVCVPASIYCNNALIGPYQRTGQNVYDVRGKCEDESNLCYKGMGYVSEYLNKREVREAVGAEVDGYDSCNFDINRNFLFHGDWMKPYHRLVPGLLEQIPVLIYAGDADFICNWLGNKAWSEALEWPGQKEYASAELEDLVIEQNEHQGKKIGQIKSHGNFTFMRLYGGGHMVPMDQPEASLEFFNRWIGGEWF.

The N-terminal stretch at methionine 1–valine 17 is a signal peptide. Residues proline 18–lysine 124 constitute a propeptide that is removed on maturation. 5 cysteine pairs are disulfide-bonded: cysteine 179/cysteine 419, cysteine 313/cysteine 327, cysteine 337/cysteine 360, cysteine 344/cysteine 353, and cysteine 382/cysteine 389. N-linked (GlcNAc...) asparagine glycosylation is present at asparagine 210. Serine 266 is a catalytic residue. Residue aspartate 458 is part of the active site. Asparagine 509 carries N-linked (GlcNAc...) asparagine glycosylation. Residue histidine 520 is part of the active site.

Belongs to the peptidase S10 family.

The protein localises to the vacuole. It carries out the reaction Release of a C-terminal amino acid with broad specificity.. Its function is as follows. Vacuolar carboxypeptidase involved in degradation of small peptides. Digests preferentially peptides containing an aliphatic or hydrophobic residue in P1' position, as well as methionine, leucine or phenylalanine in P1 position of ester substrate. This is Carboxypeptidase Y homolog A (cpyA) from Aspergillus clavatus (strain ATCC 1007 / CBS 513.65 / DSM 816 / NCTC 3887 / NRRL 1 / QM 1276 / 107).